A 770-amino-acid polypeptide reads, in one-letter code: Low-density lipoprotein receptor-related protein 3 (770 aa).

The N-terminal stretch at 1–36 is a signal peptide; sequence MEKRAAAGPEGAPGARAPLAVVCLVNLFLTGRLSSA. Topologically, residues 37 to 496 are extracellular; that stretch reads VPALAACSGK…HGCLAAVPRK (460 aa). Intrachain disulfides connect Cys-43/Cys-72, Cys-99/Cys-120, Cys-166/Cys-178, Cys-173/Cys-191, Cys-185/Cys-200, Cys-212/Cys-227, Cys-219/Cys-240, Cys-234/Cys-249, and Cys-254/Cys-282. One can recognise a CUB 1 domain in the interval 43–159; that stretch reads CSGKLEQHTE…QGFRLSYIRG (117 aa). N-linked (GlcNAc...) asparagine glycosylation occurs at Asn-71. LDL-receptor class A domains follow at residues 165–201 and 211–250; these read SCQTDEFRCDNGKCLPGPWQCNMVDECGDGSDEGNCS and LCPGGTFPCSGARSTRCLPVERRCDGTQDCGDGSDEAGCP. An N-linked (GlcNAc...) asparagine glycan is attached at Asn-199. A CUB 2 domain is found at 254–365; that stretch reads CGRRLGSFYG…HGFNATYQVK (112 aa). N-linked (GlcNAc...) asparagine glycosylation occurs at Asn-359. LDL-receptor class A domains follow at residues 415 to 453 and 454 to 490; these read ACPPDQYPCEGGSGLCYAPADRCNNQKSCPDGADEKNCF and SCQPGTFHCGTNLCIFETWRCDGQEDCQDGSDEHGCL. 6 cysteine pairs are disulfide-bonded: Cys-416–Cys-430, Cys-423–Cys-443, Cys-437–Cys-452, Cys-455–Cys-467, Cys-462–Cys-480, and Cys-474–Cys-489. Residues 497-517 form a helical membrane-spanning segment; it reads VITAALIGSLVCGLLLVIALG. Residues 518-770 are Cytoplasmic-facing; the sequence is CAFKLYSLRT…ASDDEALLVC (253 aa). The segment at 639-753 is disordered; sequence LLQAAPGPVP…PLGVCRSPPP (115 aa). Residues 689–703 show a composition bias toward basic and acidic residues; the sequence is RDPEYRPEDKERKAC.

The protein belongs to the LDLR family. Binds GGA1 and GGA2.

The protein resides in the membrane. The protein localises to the coated pit. Functionally, probable receptor, which may be involved in the internalization of lipophilic molecules and/or signal transduction. Its precise role is however unclear, since it does not bind to very low density lipoprotein (VLDL) or to LRPAP1 in vitro. The polypeptide is Low-density lipoprotein receptor-related protein 3 (Lrp3) (Rattus norvegicus (Rat)).